The following is a 391-amino-acid chain: 1-deoxy-D-xylulose 5-phosphate reductoisomerase (391 aa).

NADPH-binding residues include T17, G18, S19, I20, N47, and N130. 1-deoxy-D-xylulose 5-phosphate is bound at residue K131. Residue E132 participates in NADPH binding. Position 156 (D156) interacts with Mn(2+). The 1-deoxy-D-xylulose 5-phosphate site is built by S157, E158, S182, and H205. E158 lines the Mn(2+) pocket. G211 is a binding site for NADPH. Positions 218, 223, 224, and 227 each coordinate 1-deoxy-D-xylulose 5-phosphate. Residue E227 coordinates Mn(2+).

Belongs to the DXR family. It depends on Mg(2+) as a cofactor. The cofactor is Mn(2+).

It carries out the reaction 2-C-methyl-D-erythritol 4-phosphate + NADP(+) = 1-deoxy-D-xylulose 5-phosphate + NADPH + H(+). Its pathway is isoprenoid biosynthesis; isopentenyl diphosphate biosynthesis via DXP pathway; isopentenyl diphosphate from 1-deoxy-D-xylulose 5-phosphate: step 1/6. Its function is as follows. Catalyzes the NADPH-dependent rearrangement and reduction of 1-deoxy-D-xylulose-5-phosphate (DXP) to 2-C-methyl-D-erythritol 4-phosphate (MEP). This is 1-deoxy-D-xylulose 5-phosphate reductoisomerase from Rhizobium meliloti (strain 1021) (Ensifer meliloti).